A 396-amino-acid chain; its full sequence is MIISAASDYRAAAQRILPPFLFHYMDGGAYSEYTLRRNVEDLSEVALRQRILKNMSDLSLETTLFNEKLSMPVALAPVGLCGMYARRGEVQAAKAADAHGIPFTLSTVSVCPIEEVAPAIKRPMWFQLYVLRDRGFMRNALERAKAAGCSTLVFTVDMPTPGARYRDAHSGMSGPNAAMRRYLQAVTHPQWAWDVGLNGRPHDLGNISAYLGKPTGLEDYIGWLGNNFDPSISWKDLEWIRDFWDGPMVIKGILDPEDARDAVRFGADGIVVSNHGGRQLDGVLSSARALPAIADAVKGDIAILADSGIRNGLDVVRMIALGADTVLLGRAFLYALATAGQAGVANLLNLIEKEMKVAMTLTGAKSISEITQDSLVQELSKAPAAALAPMAKGNAA.

The 380-residue stretch at 1 to 380 folds into the FMN hydroxy acid dehydrogenase domain; the sequence is MIISAASDYR…TQDSLVQELS (380 aa). Tyr24 provides a ligand contact to substrate. Residues Ser106 and Gln127 each contribute to the FMN site. Tyr129 lines the substrate pocket. Thr155 is an FMN binding site. Arg164 contacts substrate. Lys251 provides a ligand contact to FMN. His275 functions as the Proton acceptor in the catalytic mechanism. Arg278 contacts substrate. 306–330 is an FMN binding site; sequence DSGIRNGLDVVRMIALGADTVLLGR.

Belongs to the FMN-dependent alpha-hydroxy acid dehydrogenase family. It depends on FMN as a cofactor.

Its subcellular location is the cell inner membrane. It catalyses the reaction (S)-lactate + A = pyruvate + AH2. Functionally, catalyzes the conversion of L-lactate to pyruvate. Is coupled to the respiratory chain. This Escherichia coli (strain SMS-3-5 / SECEC) protein is L-lactate dehydrogenase.